A 626-amino-acid polypeptide reads, in one-letter code: MGFIAEGNTLAWEDSVKYLEYIREHGVIQLLNIIKNNKDKVTEDFKWGDEVEYILINNDNYKLKLRANEILDLLMLEEKRNPTTVEHLWRPEYGRFMIEGTPGSPYIGLGKQLLSIQSNLKSRRENVEKYLKPNESILTITSYPRMGCKNFTDPQGEVKGPIAESKFLPDTVINPHFRFSTLTANIRKRRGGTVSINIPMYRDKNTPEYLDQICTYEKVPPILDDSDNSQTNISSPSNQPFNIYMDAMGFGMGCCCLQTTFQLPNIDDARTVYDQLAPISPLMLSLTAASSIFKGYLSDIDARWTIISQSVDDRNKEELGKAPLNNNKFVINKSRYDSIDSYIGSKSKSFRSEYNDLDLVYDKDVYQKLIENGVDSLLSKHFAHLFIRDPLVIYSDKIEIDDEKNTDHFENIQSTNWQTVRFKPPPPSSSIGWRVELRPMEVQLTDFQNSAFVVFSAILVKAIQDLKLNFYIPITKVDENLKTAHKRASVINDKFYFRKNIYNNTPNGSIENEYELMTINEIFNGKGGDNKGLIGVIRDYISTLDFDNETTELVNKYIKFISKRASGEIKSISTWTREFVQNHPAYNHDSIVNDEIQADYLQRCLDISNGTIYDSSIQGDKDDYYC.

Belongs to the glutamate--cysteine ligase type 3 family. In terms of assembly, monomer.

The catalysed reaction is L-cysteine + L-glutamate + ATP = gamma-L-glutamyl-L-cysteine + ADP + phosphate + H(+). Its pathway is sulfur metabolism; glutathione biosynthesis; glutathione from L-cysteine and L-glutamate: step 1/2. In terms of biological role, an essential enzyme in glutathione (L-gamma-glutamyl-L-cysteinylglycine, GSH) biosynthesis, GSH is essential for growth and differentiation to prespore stage. Catalyzes the condensation of glutamate to cysteine. This Dictyostelium discoideum (Social amoeba) protein is Glutamate--cysteine ligase (gcsA).